The sequence spans 65 residues: Small ribosomal subunit protein bS21B (65 aa).

It belongs to the bacterial ribosomal protein bS21 family.

In Geobacter sulfurreducens (strain ATCC 51573 / DSM 12127 / PCA), this protein is Small ribosomal subunit protein bS21B.